Here is a 178-residue protein sequence, read N- to C-terminus: NAD(P)H-quinone oxidoreductase subunit J (178 aa).

Belongs to the complex I 30 kDa subunit family. In terms of assembly, NDH-1 can be composed of about 15 different subunits; different subcomplexes with different compositions have been identified which probably have different functions.

It is found in the cellular thylakoid membrane. The catalysed reaction is a plastoquinone + NADH + (n+1) H(+)(in) = a plastoquinol + NAD(+) + n H(+)(out). It carries out the reaction a plastoquinone + NADPH + (n+1) H(+)(in) = a plastoquinol + NADP(+) + n H(+)(out). Functionally, NDH-1 shuttles electrons from an unknown electron donor, via FMN and iron-sulfur (Fe-S) centers, to quinones in the respiratory and/or the photosynthetic chain. The immediate electron acceptor for the enzyme in this species is believed to be plastoquinone. Couples the redox reaction to proton translocation, and thus conserves the redox energy in a proton gradient. Cyanobacterial NDH-1 also plays a role in inorganic carbon-concentration. In Crocosphaera subtropica (strain ATCC 51142 / BH68) (Cyanothece sp. (strain ATCC 51142)), this protein is NAD(P)H-quinone oxidoreductase subunit J.